Here is a 202-residue protein sequence, read N- to C-terminus: Nascent polypeptide-associated complex subunit alpha (202 aa).

The span at 1–19 shows a compositional bias: basic and acidic residues; it reads MADPRVEELPDEEVPKTNV. A disordered region spans residues 1-42; the sequence is MADPRVEELPDEEVPKTNVEDAGSSSESEAGDEPTIPGGAAV. An NAC-A/B domain is found at 46 to 111; sequence SRNEKKARKA…AKIEDLNATA (66 aa). Over residues 117 to 126 the composition is skewed to low complexity; it reads QQLAEAAANE. A disordered region spans residues 117-165; it reads QQLAEAAANEHAGHDHEHDHGKGKAPEAEAKKEEEEDDGEEVDESGLEA. Residues 127–149 show a composition bias toward basic and acidic residues; the sequence is HAGHDHEHDHGKGKAPEAEAKKE. Acidic residues predominate over residues 150 to 162; it reads EEEDDGEEVDESG. Residues 163 to 202 form the UBA domain; sequence LEAKDIELVMAQANVSRKKAVKALRENDNDIVNSIMALSI.

The protein belongs to the NAC-alpha family. In terms of assembly, part of the nascent polypeptide-associated complex (NAC), consisting of egd2 and egd1. NAC associates with ribosomes via egd1.

Its subcellular location is the cytoplasm. The protein localises to the nucleus. Its function is as follows. Component of the nascent polypeptide-associated complex (NAC), a dynamic component of the ribosomal exit tunnel, protecting the emerging polypeptides from interaction with other cytoplasmic proteins to ensure appropriate nascent protein targeting. The NAC complex also promotes mitochondrial protein import by enhancing productive ribosome interactions with the outer mitochondrial membrane and blocks the inappropriate interaction of ribosomes translating non-secretory nascent polypeptides with translocation sites in the membrane of the endoplasmic reticulum. Egd2 may also be involved in transcription regulation. The protein is Nascent polypeptide-associated complex subunit alpha (egd2) of Aspergillus niger (strain ATCC MYA-4892 / CBS 513.88 / FGSC A1513).